A 171-amino-acid polypeptide reads, in one-letter code: uncharacterized protein (171 aa).

This is an uncharacterized protein from Mycobacterium tuberculosis (strain ATCC 25618 / H37Rv).